The following is a 273-amino-acid chain: Dermonecrotic toxin LruSicTox-alphaIC1a (273 aa).

Residue His-5 is part of the active site. The Mg(2+) site is built by Glu-25 and Asp-27. His-41 functions as the Nucleophile in the catalytic mechanism. 2 disulfide bridges follow: Cys-45–Cys-51 and Cys-47–Cys-190. Asp-85 serves as a coordination point for Mg(2+).

The protein belongs to the arthropod phospholipase D family. Class II subfamily. It depends on Mg(2+) as a cofactor. Expressed by the venom gland.

The protein resides in the secreted. It carries out the reaction an N-(acyl)-sphingosylphosphocholine = an N-(acyl)-sphingosyl-1,3-cyclic phosphate + choline. The enzyme catalyses an N-(acyl)-sphingosylphosphoethanolamine = an N-(acyl)-sphingosyl-1,3-cyclic phosphate + ethanolamine. It catalyses the reaction a 1-acyl-sn-glycero-3-phosphocholine = a 1-acyl-sn-glycero-2,3-cyclic phosphate + choline. The catalysed reaction is a 1-acyl-sn-glycero-3-phosphoethanolamine = a 1-acyl-sn-glycero-2,3-cyclic phosphate + ethanolamine. Dermonecrotic toxins cleave the phosphodiester linkage between the phosphate and headgroup of certain phospholipids (sphingolipid and lysolipid substrates), forming an alcohol (often choline) and a cyclic phosphate. This toxin acts on sphingomyelin (SM). It may also act on ceramide phosphoethanolamine (CPE), lysophosphatidylcholine (LPC) and lysophosphatidylethanolamine (LPE), but not on lysophosphatidylserine (LPS), and lysophosphatidylglycerol (LPG). It acts by transphosphatidylation, releasing exclusively cyclic phosphate products as second products. Induces dermonecrosis, hemolysis, increased vascular permeability, edema, inflammatory response, and platelet aggregation. This Loxosceles rufescens (Mediterranean recluse spider) protein is Dermonecrotic toxin LruSicTox-alphaIC1a.